We begin with the raw amino-acid sequence, 222 residues long: MAGKPILHYFNGRGRMECIRWLLAAAGVEFEEKFIKTPEDLDKLTNDGSLLFQQVPMVEIDGMKLVQTRAILNYIATKYNLYGKDAKERALIDMYTEGVADLGEMILLLPLCPPNEKDAKVASIKEKSTNRYLPAFEKVLKSHGQDYLVGNKLSRADIQLVELLYYVEELDPSLLANFPLLKALKTRVSNLPTVKKFLQPGSQRKPPMDAKKIRRSQEYFPD.

N-acetylmethionine is present on M1. At A2 the chain carries N-acetylalanine; in Glutathione S-transferase alpha M14, N-terminally processed. A GST N-terminal domain is found at 3-83; it reads GKPILHYFNG…YIATKYNLYG (81 aa). K4 is modified (N6-succinyllysine). Glutathione contacts are provided by residues Y9, 54–55, and 67–68; these read QV and QT. The region spanning 85–208 is the GST C-terminal domain; it reads DAKERALIDM…QPGSQRKPPM (124 aa). A disordered region spans residues 199 to 222; that stretch reads QPGSQRKPPMDAKKIRRSQEYFPD. Basic and acidic residues predominate over residues 206–222; it reads PPMDAKKIRRSQEYFPD.

The protein belongs to the GST superfamily. Alpha family. Homodimer or heterodimer of GSTA1 and GSTA2.

It localises to the cytoplasm. The catalysed reaction is RX + glutathione = an S-substituted glutathione + a halide anion + H(+). It catalyses the reaction prostaglandin A2 + glutathione = prostaglandin A2-S-(R)-glutathione. It carries out the reaction prostaglandin J2 + glutathione = prostaglandin J2-S-(R)-glutathione. The enzyme catalyses (13S)-hydroperoxy-(9Z,11E)-octadecadienoate + 2 glutathione = (13S)-hydroxy-(9Z,11E)-octadecadienoate + glutathione disulfide + H2O. The catalysed reaction is androst-5-ene-3,17-dione = androst-4-ene-3,17-dione. Its function is as follows. Glutathione S-transferase that catalyzes the nucleophilic attack of the sulfur atom of glutathione on the electrophilic groups of a wide range of exogenous and endogenous compounds. Involved in the formation of glutathione conjugates of both prostaglandin A2 (PGA2) and prostaglandin J2 (PGJ2). It also catalyzes the isomerization of D5-androstene-3,17-dione (AD) into D4-androstene-3,17-dione and may therefore play an important role in hormone biosynthesis. Through its glutathione-dependent peroxidase activity toward the fatty acid hydroperoxide (13S)-hydroperoxy-(9Z,11E)-octadecadienoate/13-HPODE it is also involved in the metabolism of oxidized linoleic acid. The polypeptide is Glutathione S-transferase alpha M14 (Sus scrofa (Pig)).